The following is a 57-amino-acid chain: Small ribosomal subunit protein bS21 (57 aa).

Belongs to the bacterial ribosomal protein bS21 family.

This Lysinibacillus sphaericus (strain C3-41) protein is Small ribosomal subunit protein bS21.